The primary structure comprises 261 residues: MSYTPGVGGDPAQLAQRISSNIQKITQCSAEIQRTLNQLGTPQDSPELRQQLQQKQQYTNQLTKETDKYIKEFGSLPTTPSEQRQRKIQKDRLVGEFTTSLTNFQKVQRQAAEREKEFVARVRASSRVSGSFPEDSSKERNLVSWESQTQPQVQVQDEEITEDDLRLIHERESSIRQLEADIMDINEIFKDLGMMIHEQGDVIDSIEANVENAEVHVQQANQQLSRAADYQRKSRKTLCIIILILVIGVVIIGLIIWGLNR.

At serine 2 the chain carries N-acetylserine. Residues 2–238 (SYTPGVGGDP…DYQRKSRKTL (237 aa)) lie on the Cytoplasmic side of the membrane. Threonine 4 carries the phosphothreonine modification. Position 45 is a phosphoserine (serine 45). Residues 47-69 (ELRQQLQQKQQYTNQLTKETDKY) are a coiled coil. Phosphoserine is present on serine 75. Residue threonine 79 is modified to Phosphothreonine. A phosphoserine mark is found at serine 125, serine 126, serine 129, and serine 205. The segment at 129–148 (SGSFPEDSSKERNLVSWESQ) is disordered. The t-SNARE coiled-coil homology domain occupies 165–227 (LRLIHERESS…QQANQQLSRA (63 aa)). The chain crosses the membrane as a helical; Anchor for type IV membrane protein span at residues 239-259 (CIIILILVIGVVIIGLIIWGL). The Vesicular segment spans residues 260–261 (NR).

The protein belongs to the syntaxin family. Forms a SNARE complex with VTI1B, STX8 and VAMP8 which functions in the homotypic fusion of late endosomes. Component of the SNARE complex composed of STX7, STX8, VAMP7 and VTI1B that is required for heterotypic fusion of late endosomes with lysosomes. Interacts with VPS11, VPS16 and VPS18. Interacts with VPS33A. Interacts with TPC1.

The protein localises to the early endosome membrane. In terms of biological role, may be involved in protein trafficking from the plasma membrane to the early endosome (EE) as well as in homotypic fusion of endocytic organelles. Mediates the endocytic trafficking from early endosomes to late endosomes and lysosomes. In Pongo abelii (Sumatran orangutan), this protein is Syntaxin-7 (STX7).